Here is a 314-residue protein sequence, read N- to C-terminus: 4-hydroxy-3-methylbut-2-enyl diphosphate reductase (314 aa).

Residue C12 participates in [4Fe-4S] cluster binding. (2E)-4-hydroxy-3-methylbut-2-enyl diphosphate is bound by residues H41 and H74. Residues H41 and H74 each contribute to the dimethylallyl diphosphate site. 2 residues coordinate isopentenyl diphosphate: H41 and H74. Residue C96 coordinates [4Fe-4S] cluster. Position 124 (H124) interacts with (2E)-4-hydroxy-3-methylbut-2-enyl diphosphate. Residue H124 coordinates dimethylallyl diphosphate. Residue H124 participates in isopentenyl diphosphate binding. E126 (proton donor) is an active-site residue. Position 167 (T167) interacts with (2E)-4-hydroxy-3-methylbut-2-enyl diphosphate. Residue C197 participates in [4Fe-4S] cluster binding. 4 residues coordinate (2E)-4-hydroxy-3-methylbut-2-enyl diphosphate: S225, S226, N227, and S269. S225, S226, N227, and S269 together coordinate dimethylallyl diphosphate. S225, S226, N227, and S269 together coordinate isopentenyl diphosphate.

Belongs to the IspH family. [4Fe-4S] cluster serves as cofactor.

The catalysed reaction is isopentenyl diphosphate + 2 oxidized [2Fe-2S]-[ferredoxin] + H2O = (2E)-4-hydroxy-3-methylbut-2-enyl diphosphate + 2 reduced [2Fe-2S]-[ferredoxin] + 2 H(+). It carries out the reaction dimethylallyl diphosphate + 2 oxidized [2Fe-2S]-[ferredoxin] + H2O = (2E)-4-hydroxy-3-methylbut-2-enyl diphosphate + 2 reduced [2Fe-2S]-[ferredoxin] + 2 H(+). The protein operates within isoprenoid biosynthesis; dimethylallyl diphosphate biosynthesis; dimethylallyl diphosphate from (2E)-4-hydroxy-3-methylbutenyl diphosphate: step 1/1. Its pathway is isoprenoid biosynthesis; isopentenyl diphosphate biosynthesis via DXP pathway; isopentenyl diphosphate from 1-deoxy-D-xylulose 5-phosphate: step 6/6. Catalyzes the conversion of 1-hydroxy-2-methyl-2-(E)-butenyl 4-diphosphate (HMBPP) into a mixture of isopentenyl diphosphate (IPP) and dimethylallyl diphosphate (DMAPP). Acts in the terminal step of the DOXP/MEP pathway for isoprenoid precursor biosynthesis. In Idiomarina loihiensis (strain ATCC BAA-735 / DSM 15497 / L2-TR), this protein is 4-hydroxy-3-methylbut-2-enyl diphosphate reductase.